The primary structure comprises 165 residues: E3 ubiquitin-protein ligase RNF181 (165 aa).

The segment at 88–129 adopts an RING-type; atypical zinc-finger fold; that stretch reads CPVCLLEFEAEETVIEMPCHHLFHSNCILPWLSKTNSCPLCR. Positions 136-165 are disordered; sequence DDSYEEHKKDKARRQQQQHRLENLHGAMYT. Thr-165 carries the post-translational modification Phosphothreonine.

This sequence belongs to the RNF181 family. As to quaternary structure, directly interacts with ITGA2B and, as a result, with integrin ITGA2B/ITGB3. There is no evidence that integrin ITGA2B/ITGB3 is an endogenous substrate for RNF181-directed ubiquitination. Auto-ubiquitinated as part of the enzymatic reaction.

It carries out the reaction S-ubiquitinyl-[E2 ubiquitin-conjugating enzyme]-L-cysteine + [acceptor protein]-L-lysine = [E2 ubiquitin-conjugating enzyme]-L-cysteine + N(6)-ubiquitinyl-[acceptor protein]-L-lysine.. It functions in the pathway protein modification; protein ubiquitination. E3 ubiquitin-protein ligase which accepts ubiquitin from an E2 ubiquitin-conjugating enzyme in the form of a thioester and then directly transfers the ubiquitin to targeted substrates. Catalyzes monoubiquitination of 26S proteasome subunit PSMC2/RPT1. This chain is E3 ubiquitin-protein ligase RNF181, found in Mus musculus (Mouse).